A 390-amino-acid polypeptide reads, in one-letter code: Spore development regulator vosA (390 aa).

One can recognise a Velvet domain in the interval 3-132; the sequence is NNTSSDFDLI…ADQGVKLRIR (130 aa). Basic and acidic residues predominate over residues 137 to 149; it reads TMLKRSTRPDEFH. Disordered stretches follow at residues 137–191 and 265–390; these read TMLK…PVKR and QASA…GTPQ. Residues 165–175 show a composition bias toward low complexity; that stretch reads PPSSSYGGYPP. The Nuclear localization signal signature appears at 273–280; sequence IPDPTGQS. 2 stretches are compositionally biased toward polar residues: residues 350-364 and 371-390; these read QTPQ…SQMV and SSVT…GTPQ.

It belongs to the velvet family. VosA subfamily. Forms a heterodimeric complex with velB; the formation of the velB-vosA complex is light-dependent. Interacts with velA, velB and velC.

It localises to the nucleus. Component of the velB-VosA heterodimeric complex that plays a dual role in activating genes associated with spore maturation and repressing certain development-associated genes. The complex binds DNA through the DNA-binding domain of vosA that recognizes an 11-nucleotide consensus sequence 5'-CTGGCCGCGGC-3' consisting of two motifs in the promoters of key developmental regulatory genes. The sequence is that of Spore development regulator vosA from Penicillium rubens (strain ATCC 28089 / DSM 1075 / NRRL 1951 / Wisconsin 54-1255) (Penicillium chrysogenum).